Reading from the N-terminus, the 169-residue chain is Nascent polypeptide-associated complex subunit alpha (169 aa).

Residues 14-78 form the NAC-A/B domain; it reads NKNEKKAREM…AKIDNFSQKL (65 aa). The disordered stretch occupies residues 85–128; it reads IQSVSKSPEEIQKDMQLAADQAGDESAKPAAAAEEDDEAPVDAG. The region spanning 130–169 is the UBA domain; it reads LSAEDIELVASQANVSKNKAIKALKEHNGDIVNAIMALSK.

It belongs to the NAC-alpha family. In terms of assembly, part of the nascent polypeptide-associated complex (NAC), consisting of EGD2 and EGD1. NAC associates with ribosomes via EGD1.

The protein resides in the cytoplasm. It localises to the nucleus. In terms of biological role, component of the nascent polypeptide-associated complex (NAC), a dynamic component of the ribosomal exit tunnel, protecting the emerging polypeptides from interaction with other cytoplasmic proteins to ensure appropriate nascent protein targeting. The NAC complex also promotes mitochondrial protein import by enhancing productive ribosome interactions with the outer mitochondrial membrane and blocks the inappropriate interaction of ribosomes translating non-secretory nascent polypeptides with translocation sites in the membrane of the endoplasmic reticulum. EGD2 may also be involved in transcription regulation. In Vanderwaltozyma polyspora (strain ATCC 22028 / DSM 70294 / BCRC 21397 / CBS 2163 / NBRC 10782 / NRRL Y-8283 / UCD 57-17) (Kluyveromyces polysporus), this protein is Nascent polypeptide-associated complex subunit alpha (EGD2).